An 819-amino-acid polypeptide reads, in one-letter code: MEPATLTRSSSLTRFPYRRGLSTLRLARVNSFSILPPKTLLRQKPLRISASLNLPPRSIRLRAVEDHHHDHHHDDEQDHHNHHHHHHQHGCCSVELKAESKPQKMLFGFAKAIGWVRLANYLREHLHLCCSAAAMFLAAAVCPYLAPEPYIKSLQNAFMIVGFPLVGVSASLDALMDIAGGKVNIHVLMALAAFASVFMGNALEGGLLLAMFNLAHIAEEFFTSRSMVDVKELKESNPDSALLIEVHNGNVPNISDLSYKSVPVHSVEVGSYVLVGTGEIVPVDCEVYQGSATITIEHLTGEVKPLEAKAGDRVPGGARNLDGRMIVKATKAWNDSTLNKIVQLTEEAHSNKPKLQRWLDEFGENYSKVVVVLSLAIAFLGPFLFKWPFLSTAACRGSVYRALGLMVAASPCALAVAPLAYATAISSCARKGILLKGAQVLDALASCHTIAFDKTGTLTTGGLTCKAIEPIYGHQGGTNSSVITCCIPNCEKEALAVAAAMEKGTTHPIGRAVVDHSVGKDLPSIFVESFEYFPGRGLTATVNGVKTVAEESRLRKASLGSIEFITSLFKSEDESKQIKDAVNASSYGKDFVHAALSVDQKVTLIHLEDQPRPGVSGVIAELKSWARLRVMMLTGDHDSSAWRVANAVGITEVYCNLKPEDKLNHVKNIAREAGGGLIMVGEGINDAPALAAATVGIVLAQRASATAIAVADILLLRDNITGVPFCVAKSRQTTSLVKQNVALALTSIFLAALPSVLGFVPLWLTVLLHEGGTLLVCLNSVRGLNDPSWSWKQDIVHLINKLRSQEPTSSSSNSLSSAH.

The transit peptide at 1-17 (MEPATLTRSSSLTRFPY) directs the protein to the chloroplast. The Stromal segment spans residues 18 to 122 (RRGLSTLRLA…IGWVRLANYL (105 aa)). Positions 66 to 79 (DHHHDHHHDDEQDH) are enriched in basic and acidic residues. Residues 66-87 (DHHHDHHHDDEQDHHNHHHHHH) are disordered. The chain crosses the membrane as a helical span at residues 123 to 144 (REHLHLCCSAAAMFLAAAVCPY). The Lumenal portion of the chain corresponds to 145-153 (LAPEPYIKS). A helical membrane pass occupies residues 154–173 (LQNAFMIVGFPLVGVSASLD). The Stromal portion of the chain corresponds to 174–180 (ALMDIAG). The chain crosses the membrane as a helical span at residues 181–201 (GKVNIHVLMALAAFASVFMGN). A topological domain (lumenal) is located at residue alanine 202. Residues 203-223 (LEGGLLLAMFNLAHIAEEFFT) traverse the membrane as a helical segment. Topologically, residues 224 to 361 (SRSMVDVKEL…KPKLQRWLDE (138 aa)) are stromal. A helical membrane pass occupies residues 362–384 (FGENYSKVVVVLSLAIAFLGPFL). Over 385 to 398 (FKWPFLSTAACRGS) the chain is Lumenal. Residues 399 to 416 (VYRALGLMVAASPCALAV) traverse the membrane as a helical segment. Residues 417–737 (APLAYATAIS…AKSRQTTSLV (321 aa)) are Stromal-facing. Residue aspartate 453 is the 4-aspartylphosphate intermediate of the active site. Glutamate 682 and aspartate 686 together coordinate Mg(2+). A helical transmembrane segment spans residues 738–757 (KQNVALALTSIFLAALPSVL). The Lumenal portion of the chain corresponds to 758–762 (GFVPL). A helical transmembrane segment spans residues 763–781 (WLTVLLHEGGTLLVCLNSV). Residues 782–819 (RGLNDPSWSWKQDIVHLINKLRSQEPTSSSSNSLSSAH) are Stromal-facing.

It belongs to the cation transport ATPase (P-type) (TC 3.A.3) family. Type IB subfamily.

It is found in the plastid. It localises to the chloroplast inner membrane. The enzyme catalyses Zn(2+)(in) + ATP + H2O = Zn(2+)(out) + ADP + phosphate + H(+). It carries out the reaction Cd(2+)(in) + ATP + H2O = Cd(2+)(out) + ADP + phosphate + H(+). Functionally, involved in cadmium/zinc transport. The chain is Probable cadmium/zinc-transporting ATPase HMA1, chloroplastic (HMA1) from Arabidopsis thaliana (Mouse-ear cress).